Consider the following 458-residue polypeptide: Divalent metal cation transporter MntH (458 aa).

A run of 11 helical transmembrane segments spans residues 38–58 (GFWK…VGYM), 76–96 (SLLS…AMAA), 119–139 (GGFL…AEII), 151–171 (MPLI…LLLM), 180–200 (AVVA…VILA), 223–243 (MLYL…LFLG), 275–295 (LTMA…LFFG), 315–335 (IVGA…LLAS), 370–390 (LMSV…EAKI), 393–413 (LLTF…IPLV), and 437–457 (FISG…LGFV).

This sequence belongs to the NRAMP family.

The protein localises to the cell membrane. Its function is as follows. H(+)-stimulated, divalent metal cation uptake system. The polypeptide is Divalent metal cation transporter MntH (Lacticaseibacillus casei (strain BL23) (Lactobacillus casei)).